The primary structure comprises 503 residues: Probable apyrase 4 (503 aa).

The span at 1–14 (MQRSNARSRSNINS) shows a compositional bias: low complexity. Residues 1 to 39 (MQRSNARSRSNINSDMVDPPEVQTSPGNHRSSPSTAAKP) are disordered. Residues 1 to 45 (MQRSNARSRSNINSDMVDPPEVQTSPGNHRSSPSTAAKPKSKRTK) are Cytoplasmic-facing. The chain crosses the membrane as a helical; Signal-anchor for type II membrane protein span at residues 46 to 66 (SIIFVIVACVTIALGLLFIGY). Topologically, residues 67–503 (SILRSGRNRR…DLSNVAKYKI (437 aa)) are extracellular. An ATP-binding site is contributed by 83–93 (VIIDGGSSGTR). Glu-206 serves as the catalytic Proton acceptor. 230–240 (GIVELGGASAQ) lines the ATP pocket. N-linked (GlcNAc...) asparagine glycans are attached at residues Asn-261, Asn-293, and Asn-338.

This sequence belongs to the GDA1/CD39 NTPase family. Ca(2+) serves as cofactor. As to expression, expressed both in the primary root and lateral root but not in the rosette leaves.

It is found in the membrane. The enzyme catalyses a ribonucleoside 5'-triphosphate + 2 H2O = a ribonucleoside 5'-phosphate + 2 phosphate + 2 H(+). Its function is as follows. Catalyzes the hydrolysis of phosphoanhydride bonds of nucleoside tri- and di-phosphates. The protein is Probable apyrase 4 (APY4) of Arabidopsis thaliana (Mouse-ear cress).